Reading from the N-terminus, the 309-residue chain is Ribonuclease Z (309 aa).

Zn(2+) contacts are provided by His63, His65, Asp67, His68, His145, Asp216, and His274. Asp67 (proton acceptor) is an active-site residue.

This sequence belongs to the RNase Z family. In terms of assembly, homodimer. Zn(2+) is required as a cofactor.

The enzyme catalyses Endonucleolytic cleavage of RNA, removing extra 3' nucleotides from tRNA precursor, generating 3' termini of tRNAs. A 3'-hydroxy group is left at the tRNA terminus and a 5'-phosphoryl group is left at the trailer molecule.. Functionally, zinc phosphodiesterase, which displays some tRNA 3'-processing endonuclease activity. Probably involved in tRNA maturation, by removing a 3'-trailer from precursor tRNA. The chain is Ribonuclease Z from Streptococcus pneumoniae serotype 19F (strain G54).